Consider the following 533-residue polypeptide: MDATAFHPSLWGDFFVKYKPPTAPKRGHMTERAELLKEEVRKTLKAAANQITNALDLIITLQRLGLDHHYENEISELLRFVYSSSDYDDKDLYVVSLRFYLLRKHGHCVSSDVFTSFKDEEGNFVVDDTKCLLSLYNAAYVRTHGEKVLDEAITFTRRQLEASLLDPLEPALADEVHLTLQTPLFRRLRILEAINYIPIYGKEAGRNEAILELAKLNFNLAQLIYCEELKEVTLWWKQLNVETNLSFIRDRIVECHFWMTGACCEPQYSLSRVIATKMTALITVLDDMMDTYSTTEEAMLLAEAIYRWEENAAELLPRYMKDFYLYLLKTIDSCGDELGPNRSFRTFYLKEMLKVLVRGSSQEIKWRNENYVPKTISEHLEHSGPTVGAFQVACSSFVGMGDSITKESFEWLLTYPELAKSLMNISRLLNDTASTKREQNAGQHVSTVQCYMLKHGTTMDEACEKIKELTEDSWKDMMELYLTPTEHPKLIAQTIVDFARTADYMYKETDGFTFSHTIKDMIAKLFVDPISLF.

Residues aspartate 286 and aspartate 290 each contribute to the Mg(2+) site. Substrate-binding residues include aspartate 286, aspartate 290, arginine 427, and asparagine 430. Positions 286–290 (DDMMD) match the DDXXD motif motif. Mg(2+) contacts are provided by asparagine 430 and glutamate 438.

It belongs to the terpene synthase family. Monomer. It depends on Mg(2+) as a cofactor. Requires Mn(2+) as cofactor.

The protein resides in the cytoplasm. It carries out the reaction (2E,6E)-farnesyl diphosphate = (E)-beta-farnesene + diphosphate. It catalyses the reaction (2E,6E)-farnesyl diphosphate = alpha-copaene + diphosphate. The catalysed reaction is (2E,6E)-farnesyl diphosphate = (1S,5S,6R)-alpha-bergamotene + diphosphate. The enzyme catalyses (2E,6E)-farnesyl diphosphate = (-)-(E)-beta-caryophyllene + diphosphate. It carries out the reaction (2E,6E)-farnesyl diphosphate = delta-cadinene + diphosphate. It catalyses the reaction (2E,6E)-farnesyl diphosphate = (+)-germacrene D + diphosphate. The catalysed reaction is (2E,6E)-farnesyl diphosphate = alpha-zingiberene + diphosphate. The enzyme catalyses (2E,6E)-farnesyl diphosphate = alpha-muurolene + diphosphate. It carries out the reaction (2E,6E)-farnesyl diphosphate = (S)-beta-bisabolene + diphosphate. It catalyses the reaction (2E,6E)-farnesyl diphosphate = beta-sesquiphellandrene + diphosphate. The catalysed reaction is (2E,6E)-farnesyl diphosphate = sesquisabinene A + diphosphate. It participates in secondary metabolite biosynthesis; terpenoid biosynthesis. In terms of biological role, sesquiterpene cyclase catalyzing mainly the production of beta-farnesene and alpha-bergamotene in equal amounts from farnesyl diphosphate. Also mediates the biosynthesis of minor sesquiterpene hydrocarbons including alpha-muurolene, beta-bisabolene, zingiberene, sesquiphellandrene, sesquisabinene A, germacrene D, delta-cadinene, alpha-copaene and (E)-beta-caryophyllene. Involved in indirect defense by producing volatile signals attracting natural enemies of herbivores. This Zea mays (Maize) protein is (E)-beta-farnesene synthase.